The following is a 402-amino-acid chain: MTEALGTVTPGMRNFTINFGPQHPAAHGVLRLVLELDGEVVERVDPHIGLLHRGTEKLIEQKTYLQAIPYFDRLDYVAPMNQEHAFCLAAERLLGIAVPRRGQLIRVLYCEIGRILSHLLNVTTQAMDVGALTPPLWGFEEREKLMMFYERASGSRMHAAYFRIGGVHQDLPPRLIDDIEAWCDPFLQVVADLDRLLTANRIFKQRNVDIGVVTLEQAWEWGFSGVMVRGSGAAWDLRKAQPYECYAEMDFDIPIGKNGDCYDRYLIRMEEMRQSVRIMKQCIAKLRAPDGQGPVAVEDNKIFPPRRGEMKRSMEALIHHFKLYTEGFHVPAGEIYAAVEAPKGEFGVYLVSDGSNKPYKCKIRAPGFAHLQAMDFICRGHLLADVSAILGSLDIVFGEVDR.

This sequence belongs to the complex I 49 kDa subunit family. As to quaternary structure, NDH-1 is composed of 14 different subunits. Subunits NuoB, C, D, E, F, and G constitute the peripheral sector of the complex.

The protein localises to the cell inner membrane. It carries out the reaction a quinone + NADH + 5 H(+)(in) = a quinol + NAD(+) + 4 H(+)(out). Its function is as follows. NDH-1 shuttles electrons from NADH, via FMN and iron-sulfur (Fe-S) centers, to quinones in the respiratory chain. The immediate electron acceptor for the enzyme in this species is believed to be ubiquinone. Couples the redox reaction to proton translocation (for every two electrons transferred, four hydrogen ions are translocated across the cytoplasmic membrane), and thus conserves the redox energy in a proton gradient. The sequence is that of NADH-quinone oxidoreductase subunit D from Nitrobacter winogradskyi (strain ATCC 25391 / DSM 10237 / CIP 104748 / NCIMB 11846 / Nb-255).